Here is a 366-residue protein sequence, read N- to C-terminus: Aminomethyltransferase (366 aa).

Belongs to the GcvT family. The glycine cleavage system is composed of four proteins: P, T, L and H.

The catalysed reaction is N(6)-[(R)-S(8)-aminomethyldihydrolipoyl]-L-lysyl-[protein] + (6S)-5,6,7,8-tetrahydrofolate = N(6)-[(R)-dihydrolipoyl]-L-lysyl-[protein] + (6R)-5,10-methylene-5,6,7,8-tetrahydrofolate + NH4(+). The glycine cleavage system catalyzes the degradation of glycine. The protein is Aminomethyltransferase of Neisseria meningitidis serogroup A / serotype 4A (strain DSM 15465 / Z2491).